The chain runs to 435 residues: Casein kinase 1-like protein 12 (435 aa).

Residues 9–278 form the Protein kinase domain; the sequence is YRLGRKIGSG…LKRIFRDLFI (270 aa). ATP is bound by residues 15–23 and Lys-38; that span reads IGSGSFGEI. Asp-128 functions as the Proton acceptor in the catalytic mechanism. Disordered regions lie at residues 313–363 and 394–414; these read VGTS…RGPM and LRNSPVVTTPEGKRSSSTRKH.

It belongs to the protein kinase superfamily. CK1 Ser/Thr protein kinase family. Casein kinase I subfamily. As to quaternary structure, monomer. Post-translationally, autophosphorylated.

Its subcellular location is the cytoplasm. It catalyses the reaction L-seryl-[protein] + ATP = O-phospho-L-seryl-[protein] + ADP + H(+). It carries out the reaction L-threonyl-[protein] + ATP = O-phospho-L-threonyl-[protein] + ADP + H(+). In terms of biological role, casein kinases are operationally defined by their preferential utilization of acidic proteins such as caseins as substrates. It can phosphorylate a large number of proteins. In Arabidopsis thaliana (Mouse-ear cress), this protein is Casein kinase 1-like protein 12.